A 129-amino-acid polypeptide reads, in one-letter code: uncharacterized protein (129 aa).

A helical transmembrane segment spans residues 8-24 (YLILFITIIAICSLFRI).

It is found in the membrane. This is an uncharacterized protein from Rickettsia prowazekii (strain Madrid E).